The following is a 492-amino-acid chain: Serine incorporator 4 (492 aa).

A run of 10 helical transmembrane segments spans residues 59–79 (YILL…KTVV), 113–133 (AVYR…VLLV), 148–168 (SFWS…FCIP), 179–199 (IGIC…TAFA), 219–239 (GVSL…VLLF), 254–274 (LLSL…APCI), 281–301 (SGLL…FSAL), 330–350 (IPDT…VLFA), 421–441 (GFHF…TNWF), and 464–484 (VASC…PLLA).

The protein belongs to the TDE1 family.

It is found in the membrane. Its function is as follows. Incorporates a polar amino acid serine into membranes and facilitates the synthesis of two serine-derived lipids, phosphatidylserine and sphingolipids. The polypeptide is Serine incorporator 4 (Serinc4) (Mus musculus (Mouse)).